Consider the following 136-residue polypeptide: Large ribosomal subunit protein uL16c (136 aa).

It belongs to the universal ribosomal protein uL16 family. As to quaternary structure, part of the 50S ribosomal subunit.

The protein resides in the plastid. Its subcellular location is the chloroplast. This Illicium oligandrum (Star anise) protein is Large ribosomal subunit protein uL16c.